The primary structure comprises 231 residues: Insertion sequence IS1162 putative ATP-binding protein (231 aa).

An ATP-binding site is contributed by 107-114; sequence GPTGVGKT.

The protein belongs to the IS21/IS1162 putative ATP-binding protein family.

The sequence is that of Insertion sequence IS1162 putative ATP-binding protein from Pseudomonas fluorescens.